A 93-amino-acid polypeptide reads, in one-letter code: Acyl carrier protein AcpXL (93 aa).

Residues 2–88 form the Carrier domain; sequence STTFDKVAKI…NLCAKIDALV (87 aa). The residue at position 37 (Ser37) is an O-(pantetheine 4'-phosphoryl)serine.

Post-translationally, 4'-phosphopantetheine is transferred from CoA to a specific serine of apo-ACP by AcpS. This modification is essential for activity because fatty acids are bound in thioester linkage to the sulfhydryl of the prosthetic group.

Its subcellular location is the cytoplasm. It participates in glycolipid biosynthesis; KDO(2)-lipid A biosynthesis. In terms of biological role, carrier of the growing fatty acid chain in fatty acid biosynthesis. Is involved in the transfer of long hydroxylated fatty acids to lipid A. The protein is Acyl carrier protein AcpXL (acpXL) of Mesorhizobium japonicum (strain LMG 29417 / CECT 9101 / MAFF 303099) (Mesorhizobium loti (strain MAFF 303099)).